We begin with the raw amino-acid sequence, 299 residues long: uncharacterized protein (299 aa).

The interval 1–38 (MSLDSNSDTEFELVPKFQTQPTRGDAPKSPELEEVSTV) is disordered.

This sequence belongs to the calycin superfamily. Fatty-acid binding protein (FABP) family.

This is an uncharacterized protein from Caenorhabditis elegans.